Here is a 366-residue protein sequence, read N- to C-terminus: 3-dehydroquinate synthase (366 aa).

Residues 107–111 (GVIGD), 131–132 (TS), K144, and K153 contribute to the NAD(+) site. Zn(2+)-binding residues include E186, H251, and H268.

Belongs to the sugar phosphate cyclases superfamily. Dehydroquinate synthase family. It depends on Co(2+) as a cofactor. Zn(2+) serves as cofactor. NAD(+) is required as a cofactor.

The protein resides in the cytoplasm. It catalyses the reaction 7-phospho-2-dehydro-3-deoxy-D-arabino-heptonate = 3-dehydroquinate + phosphate. Its pathway is metabolic intermediate biosynthesis; chorismate biosynthesis; chorismate from D-erythrose 4-phosphate and phosphoenolpyruvate: step 2/7. Catalyzes the conversion of 3-deoxy-D-arabino-heptulosonate 7-phosphate (DAHP) to dehydroquinate (DHQ). The polypeptide is 3-dehydroquinate synthase (Rippkaea orientalis (strain PCC 8801 / RF-1) (Cyanothece sp. (strain PCC 8801))).